Consider the following 675-residue polypeptide: DNA gyrase subunit B (675 aa).

The 115-residue stretch at 453–567 folds into the Toprim domain; it reads SELYVVEGDS…NGHIFLAQPP (115 aa). Mg(2+) is bound by residues Glu-459, Asp-532, and Asp-534.

Belongs to the type II topoisomerase GyrB family. In terms of assembly, heterotetramer, composed of two GyrA and two GyrB chains. In the heterotetramer, GyrA contains the active site tyrosine that forms a transient covalent intermediate with DNA, while GyrB binds cofactors and catalyzes ATP hydrolysis. It depends on Mg(2+) as a cofactor. Requires Mn(2+) as cofactor. The cofactor is Ca(2+).

It localises to the cytoplasm. It carries out the reaction ATP-dependent breakage, passage and rejoining of double-stranded DNA.. Inhibited by 4-quinoline drugs (nalidixic acid, ciprofloxacin, ofloxacin), although it is much less sensitive than the corresponding enzyme from E.coli. GyrB intrinsic ATPase activity inhibited by aminopyrazinamide and pyrrolamide derivatives. In terms of biological role, a type II topoisomerase that negatively supercoils closed circular double-stranded (ds) DNA in an ATP-dependent manner to modulate DNA topology and maintain chromosomes in an underwound state. Negative supercoiling favors strand separation, and DNA replication, transcription, recombination and repair, all of which involve strand separation. Also able to catalyze the interconversion of other topological isomers of dsDNA rings, including catenanes and knotted rings. Type II topoisomerases break and join 2 DNA strands simultaneously in an ATP-dependent manner. In Mycolicibacterium smegmatis (strain ATCC 700084 / mc(2)155) (Mycobacterium smegmatis), this protein is DNA gyrase subunit B.